The sequence spans 438 residues: Phospholipase D Y (438 aa).

A signal peptide spans 1-19 (MIINRLFIIIVLFFVNVNS). A glycan (N-linked (GlcNAc...) asparagine) is linked at N50. The PLD phosphodiesterase 1 domain occupies 145-172 (GSGVLHTKLIIIDESSAYVGSANADWSS). Catalysis depends on residues H150, K152, and D157. N-linked (GlcNAc...) asparagine glycans are attached at residues N223, N336, and N394. One can recognise a PLD phosphodiesterase 2 domain in the interval 373-399 (YTRVNHAKFMVTEKQSYVGTSNWSQDY).

The protein belongs to the phospholipase D family.

The enzyme catalyses a 1,2-diacyl-sn-glycero-3-phosphocholine + H2O = a 1,2-diacyl-sn-glycero-3-phosphate + choline + H(+). With respect to regulation, inhibited by butan-1-ol. Functionally, hydrolyzes membrane phospholipids, such as PtdCho (phosphatidylcholine), producing the free headgroup and PtdOH (phosphatidic acid; signaling molecule on its own). This chain is Phospholipase D Y (pldY), found in Dictyostelium discoideum (Social amoeba).